Here is a 383-residue protein sequence, read N- to C-terminus: Succinyl-diaminopimelate desuccinylase (383 aa).

His73 is a Zn(2+) binding site. Asp75 is a catalytic residue. Residue Asp107 coordinates Zn(2+). The active-site Proton acceptor is Glu141. Zn(2+) is bound by residues Glu142, Glu170, and His356.

The protein belongs to the peptidase M20A family. DapE subfamily. Homodimer. It depends on Zn(2+) as a cofactor. Co(2+) is required as a cofactor.

It catalyses the reaction N-succinyl-(2S,6S)-2,6-diaminopimelate + H2O = (2S,6S)-2,6-diaminopimelate + succinate. It participates in amino-acid biosynthesis; L-lysine biosynthesis via DAP pathway; LL-2,6-diaminopimelate from (S)-tetrahydrodipicolinate (succinylase route): step 3/3. In terms of biological role, catalyzes the hydrolysis of N-succinyl-L,L-diaminopimelic acid (SDAP), forming succinate and LL-2,6-diaminopimelate (DAP), an intermediate involved in the bacterial biosynthesis of lysine and meso-diaminopimelic acid, an essential component of bacterial cell walls. The chain is Succinyl-diaminopimelate desuccinylase from Pseudomonas putida (strain ATCC 700007 / DSM 6899 / JCM 31910 / BCRC 17059 / LMG 24140 / F1).